The following is a 186-amino-acid chain: Ribosome-recycling factor (186 aa).

It belongs to the RRF family.

Its subcellular location is the cytoplasm. In terms of biological role, responsible for the release of ribosomes from messenger RNA at the termination of protein biosynthesis. May increase the efficiency of translation by recycling ribosomes from one round of translation to another. This is Ribosome-recycling factor from Wolinella succinogenes (strain ATCC 29543 / DSM 1740 / CCUG 13145 / JCM 31913 / LMG 7466 / NCTC 11488 / FDC 602W) (Vibrio succinogenes).